Reading from the N-terminus, the 227-residue chain is Cytochrome c oxidase subunit 2 (227 aa).

At 1 to 14 (MAYPLQLGLQDATS) the chain is on the mitochondrial intermembrane side. Residues 15 to 45 (PIMEELMNFHDHTLMIVFLISSLVLYIISLM) form a helical membrane-spanning segment. The Mitochondrial matrix portion of the chain corresponds to 46 to 59 (LTTKLTHTSTMDAQ). The helical transmembrane segment at 60-87 (EVETIWTILPAAILVLIALPSLRILYMM) threads the bilayer. The Mitochondrial intermembrane segment spans residues 88–227 (DEINNPVLTV…YFENWSASMI (140 aa)). Cu cation is bound by residues His-161, Cys-196, Glu-198, Cys-200, His-204, and Met-207. Glu-198 contacts Mg(2+). Tyr-218 is modified (phosphotyrosine).

It belongs to the cytochrome c oxidase subunit 2 family. As to quaternary structure, component of the cytochrome c oxidase (complex IV, CIV), a multisubunit enzyme composed of 14 subunits. The complex is composed of a catalytic core of 3 subunits MT-CO1, MT-CO2 and MT-CO3, encoded in the mitochondrial DNA, and 11 supernumerary subunits COX4I, COX5A, COX5B, COX6A, COX6B, COX6C, COX7A, COX7B, COX7C, COX8 and NDUFA4, which are encoded in the nuclear genome. The complex exists as a monomer or a dimer and forms supercomplexes (SCs) in the inner mitochondrial membrane with NADH-ubiquinone oxidoreductase (complex I, CI) and ubiquinol-cytochrome c oxidoreductase (cytochrome b-c1 complex, complex III, CIII), resulting in different assemblies (supercomplex SCI(1)III(2)IV(1) and megacomplex MCI(2)III(2)IV(2)). Found in a complex with TMEM177, COA6, COX18, COX20, SCO1 and SCO2. Interacts with TMEM177 in a COX20-dependent manner. Interacts with COX20. Interacts with COX16. Requires Cu cation as cofactor.

Its subcellular location is the mitochondrion inner membrane. It catalyses the reaction 4 Fe(II)-[cytochrome c] + O2 + 8 H(+)(in) = 4 Fe(III)-[cytochrome c] + 2 H2O + 4 H(+)(out). Component of the cytochrome c oxidase, the last enzyme in the mitochondrial electron transport chain which drives oxidative phosphorylation. The respiratory chain contains 3 multisubunit complexes succinate dehydrogenase (complex II, CII), ubiquinol-cytochrome c oxidoreductase (cytochrome b-c1 complex, complex III, CIII) and cytochrome c oxidase (complex IV, CIV), that cooperate to transfer electrons derived from NADH and succinate to molecular oxygen, creating an electrochemical gradient over the inner membrane that drives transmembrane transport and the ATP synthase. Cytochrome c oxidase is the component of the respiratory chain that catalyzes the reduction of oxygen to water. Electrons originating from reduced cytochrome c in the intermembrane space (IMS) are transferred via the dinuclear copper A center (CU(A)) of subunit 2 and heme A of subunit 1 to the active site in subunit 1, a binuclear center (BNC) formed by heme A3 and copper B (CU(B)). The BNC reduces molecular oxygen to 2 water molecules using 4 electrons from cytochrome c in the IMS and 4 protons from the mitochondrial matrix. The protein is Cytochrome c oxidase subunit 2 (MT-CO2) of Micaelamys namaquensis (Namaqua rock rat).